The chain runs to 753 residues: Bile salt-activated lipase (753 aa).

The signal sequence occupies residues 1–20 (MGRLQLVVLGLTCCWAVASA). Residues 21 to 121 (AKLGAVYTEG…KQVSRDLPVM (101 aa)) are heparin-binding. A disulfide bridge links cysteine 84 with cysteine 100. Asparagine 207 carries an N-linked (GlcNAc...) (complex) asparagine glycan. The Acyl-ester intermediate role is filled by serine 214. A disulfide bridge connects residues cysteine 266 and cysteine 277. Active-site charge relay system residues include aspartate 340 and histidine 455. A disordered region spans residues 555–753 (QEATPVPPTG…EAQMPAVIRF (199 aa)). O-linked (GalNAc...) threonine glycosylation is found at threonine 558, threonine 569, and threonine 579. A run of 17 repeats spans residues 559–569 (PVPPTGDSEAT), 570–580 (PVPPTGDSETA), 581–591 (PVPPTGDSGAP), 592–602 (PVPPTGDSGAP), 603–613 (PVPPTGDSGAP), 614–624 (PVPPTGDSGAP), 625–635 (PVPPTGDSGAP), 636–646 (PVPPTGDSGAP), 647–657 (PVPPTGDSGAP), 658–668 (PVPPTGDSGAP), 669–679 (PVPPTGDAGPP), 680–690 (PVPPTGDSGAP), 691–701 (PVPPTGDSGAP), 702–712 (PVTPTGDSETA), 713–723 (PVPPTGDSGAP), 724–734 (PVPPTGDSEAA), and 735–745 (PVPPTDDSKEA). The interval 559–745 (PVPPTGDSEA…VPPTDDSKEA (187 aa)) is 17 X 11 AA tandem repeats, glycodomain, O-linked (mucin type). 7 O-linked (GalNAc...) threonine glycosylation sites follow: threonine 607, threonine 618, threonine 629, threonine 640, threonine 651, threonine 662, and threonine 673. Pro residues predominate over residues 668–683 (PPVPPTGDAGPPPVPP).

Belongs to the type-B carboxylesterase/lipase family. In terms of assembly, interacts with CLC. In terms of processing, N- and O-glycosylated. In terms of tissue distribution, mammary gland and pancreas. Detected in pancreatic and duodenal juice (at protein level). Expressed by eosinophils.

It localises to the secreted. The enzyme catalyses a triacylglycerol + H2O = a diacylglycerol + a fatty acid + H(+). The catalysed reaction is 1,2,3-tri-(9Z-octadecenoyl)-glycerol + H2O = di-(9Z)-octadecenoylglycerol + (9Z)-octadecenoate + H(+). It carries out the reaction 1,2,3-trioctanoylglycerol + H2O = dioctanoylglycerol + octanoate + H(+). It catalyses the reaction a sterol ester + H2O = a sterol + a fatty acid + H(+). The enzyme catalyses cholesteryl (9Z-octadecenoate) + H2O = cholesterol + (9Z)-octadecenoate + H(+). The catalysed reaction is an acetyl ester + H2O = an aliphatic alcohol + acetate + H(+). It carries out the reaction a butanoate ester + H2O = an aliphatic alcohol + butanoate + H(+). It catalyses the reaction 9-hexadecanoyloxy-octadecanoate + H2O = 9-hydroxy-octadecanoate + hexadecanoate + H(+). The enzyme catalyses 9-(9Z-octadecenoyloxy)-octadecanoate + H2O = 9-hydroxy-octadecanoate + (9Z)-octadecenoate + H(+). The catalysed reaction is 1-hexadecanoyl-sn-glycero-3-phosphocholine + H2O = sn-glycerol 3-phosphocholine + hexadecanoate + H(+). It carries out the reaction 12-hexadecanoyloxy-octadecanoate + H2O = 12-hydroxyoctadecanoate + hexadecanoate + H(+). It catalyses the reaction 12-(9Z-octadecenoyloxy)-octadecanoate + H2O = 12-hydroxyoctadecanoate + (9Z)-octadecenoate + H(+). The enzyme catalyses 13-(9Z-octadecenoyloxy)-octadecanoate + H2O = 13-hydroxy-octadecanoate + (9Z)-octadecenoate + H(+). The catalysed reaction is 9-(9Z-hexadecenoyloxy)-octadecanoate + H2O = (9Z)-hexadecenoate + 9-hydroxy-octadecanoate + H(+). It carries out the reaction 12-(9Z-hexadecenoyloxy)-octadecanoate + H2O = 12-hydroxyoctadecanoate + (9Z)-hexadecenoate + H(+). It catalyses the reaction 13-(9Z-hexadecenoyloxy)-octadecanoate + H2O = 13-hydroxy-octadecanoate + (9Z)-hexadecenoate + H(+). The enzyme catalyses 12-octadecanoyloxy-octadecanoate + H2O = 12-hydroxyoctadecanoate + octadecanoate + H(+). The catalysed reaction is 13-octadecanoyloxy-octadecanoate + H2O = 13-hydroxy-octadecanoate + octadecanoate + H(+). It carries out the reaction 5-(9Z-hexadecenoyloxy)-octadecanoate + H2O = 5-hydroxy-octadecanoate + (9Z)-hexadecenoate + H(+). It catalyses the reaction 9-octadecanoyloxy-octadecanoate + H2O = 9-hydroxy-octadecanoate + octadecanoate + H(+). With respect to regulation, activated by bile salts such as sodium taurocholate. Its function is as follows. Catalyzes the hydrolysis of a wide range of substrates including cholesteryl esters, phospholipids, lysophospholipids, di- and tri-acylglycerols, and fatty acid esters of hydroxy fatty acids (FAHFAs). Preferentially hydrolyzes FAHFAs with the ester bond further away from the carboxylate. Unsaturated FAHFAs are hydrolyzed more quickly than saturated FAHFAs. Has an essential role in the complete digestion of dietary lipids and their intestinal absorption, along with the absorption of fat-soluble vitamins. This chain is Bile salt-activated lipase (CEL), found in Homo sapiens (Human).